Consider the following 546-residue polypeptide: MSIDASPSESVLESQTPDRVDESIPIKAEETEKDAAPGRDIVGFRWLLVCIAVFSANLLYGLDNTIVADIQAPIAGDFNEYTRLGWLGVGFTLGSVVFILPLGKAYAIFDTKWLFLGCLTMFAAGSALCGAAPSMNAIIVGRVWAGAGGAGMYLGNLNLITILTTPKEQPVYVGLVGLIYGTGCILGPIIGGAFSDSSATWRWSFYLNLVIFGVMSPIYVFLLPSLPRPAGEGRSFFKKLVELDWVGTVLSAGMHISIILFIVFGGVEWSWTDGRNIALYVVSAVLTIAFVLSQYFCIGTTKQDRLFPGEFLRDPTMLLLYIIMACGGAALFVAVYYIPLYFQFVHGDSGIMSAVRLLPFVCFYVATILLCGYVMPKTGYFIIWYLMSGVFMLIGAVLMYTVKLDTSPSNVYGYSILMGLGMTTTQAAYAVGPAIVTPDRVAECLQFMNIGQGQSQLLGLAIASAIFQTKTLSGLTALLGDKGYSQVDIQSAVAGAQSTLMERLPPALKTAALKVIVSSISDVYVMAISAGALYVVASCLLPRRRF.

Residues 1–15 (MSIDASPSESVLESQ) are compositionally biased toward polar residues. The disordered stretch occupies residues 1-29 (MSIDASPSESVLESQTPDRVDESIPIKAE). Residues 16 to 29 (TPDRVDESIPIKAE) are compositionally biased toward basic and acidic residues. A run of 14 helical transmembrane segments spans residues 41–61 (IVGFRWLLVCIAVFSANLLYG), 89–109 (VGFTLGSVVFILPLGKAYAIF), 113–133 (WLFLGCLTMFAAGSALCGAAP), 143–163 (VWAGAGGAGMYLGNLNLITIL), 171–191 (VYVGLVGLIYGTGCILGPIIG), 203–223 (WSFYLNLVIFGVMSPIYVFLL), 245–265 (WVGTVLSAGMHISIILFIVFG), 277–297 (IALYVVSAVLTIAFVLSQYFC), 318–338 (LLLYIIMACGGAALFVAVYYI), 350–370 (GIMSAVRLLPFVCFYVATILL), 379–399 (GYFIIWYLMSGVFMLIGAVLM), 416–436 (ILMGLGMTTTQAAYAVGPAIV), 447–467 (FMNIGQGQSQLLGLAIASAIF), and 515–535 (VIVSSISDVYVMAISAGALYV).

It belongs to the major facilitator superfamily. TCR/Tet family.

It localises to the vacuole membrane. Its subcellular location is the cell membrane. Its function is as follows. MFS-type transporter; part of the gene cluster that mediates the biosynthesis of patulin, an acetate-derived tetraketide mycotoxin produced by several fungal species that shows antimicrobial properties against several bacteria. May be involved in the secretion of E-ascladiol to be converted to patulin by the secreted patulin synthase patE. This Penicillium expansum (Blue mold rot fungus) protein is MFS-type transporter patC.